Here is a 216-residue protein sequence, read N- to C-terminus: Endo-1,4-beta-xylanase 1 (216 aa).

An N-terminal signal peptide occupies residues 1–19; it reads MFLTSVVSLVVGAISCVSA. The 188-residue stretch at 29–216 folds into the GH11 domain; that stretch reads QMTPRNSCYG…SSGSASITVS (188 aa). Catalysis depends on Glu112, which acts as the Nucleophile. Glu203 acts as the Proton donor in catalysis.

This sequence belongs to the glycosyl hydrolase 11 (cellulase G) family.

It is found in the secreted. It catalyses the reaction Endohydrolysis of (1-&gt;4)-beta-D-xylosidic linkages in xylans.. It functions in the pathway glycan degradation; xylan degradation. Endo-1,4-beta-xylanase involved in the hydrolysis of xylan, a major structural heterogeneous polysaccharide found in plant biomass representing the second most abundant polysaccharide in the biosphere, after cellulose. The sequence is that of Endo-1,4-beta-xylanase 1 (xyl1) from Claviceps purpurea (Ergot fungus).